The sequence spans 277 residues: Diaminopimelate epimerase (277 aa).

The substrate site is built by Asn-11 and Asn-62. Cys-71 functions as the Proton donor in the catalytic mechanism. Substrate-binding positions include 72–73, Asn-160, Asn-193, and 211–212; these read GN and ER. The active-site Proton acceptor is the Cys-220. 221–222 lines the substrate pocket; that stretch reads GT.

The protein belongs to the diaminopimelate epimerase family. In terms of assembly, homodimer.

Its subcellular location is the cytoplasm. The catalysed reaction is (2S,6S)-2,6-diaminopimelate = meso-2,6-diaminopimelate. The protein operates within amino-acid biosynthesis; L-lysine biosynthesis via DAP pathway; DL-2,6-diaminopimelate from LL-2,6-diaminopimelate: step 1/1. In terms of biological role, catalyzes the stereoinversion of LL-2,6-diaminopimelate (L,L-DAP) to meso-diaminopimelate (meso-DAP), a precursor of L-lysine. This chain is Diaminopimelate epimerase, found in Methanococcus maripaludis (strain C6 / ATCC BAA-1332).